Here is a 283-residue protein sequence, read N- to C-terminus: ATP synthase gamma chain (283 aa).

This sequence belongs to the ATPase gamma chain family. F-type ATPases have 2 components, CF(1) - the catalytic core - and CF(0) - the membrane proton channel. CF(1) has five subunits: alpha(3), beta(3), gamma(1), delta(1), epsilon(1). CF(0) has three main subunits: a, b and c.

The protein localises to the cell membrane. In terms of biological role, produces ATP from ADP in the presence of a proton gradient across the membrane. The gamma chain is believed to be important in regulating ATPase activity and the flow of protons through the CF(0) complex. In Desulforamulus reducens (strain ATCC BAA-1160 / DSM 100696 / MI-1) (Desulfotomaculum reducens), this protein is ATP synthase gamma chain.